We begin with the raw amino-acid sequence, 552 residues long: CTP synthase (552 aa).

Positions 1–270 (MTKFVFVTGG…DGLICDKLRL (270 aa)) are amidoligase domain. Ser-13 lines the CTP pocket. Ser-13 contacts UTP. Residues 14-19 (SLGKGI) and Asp-71 contribute to the ATP site. Residues Asp-71 and Glu-144 each coordinate Mg(2+). Residues 151-153 (DIE), 191-196 (KTKPTQ), and Lys-227 each bind CTP. UTP contacts are provided by residues 191 to 196 (KTKPTQ) and Lys-227. Residues 295–548 (QIAMVGKYVE…IKAAVEHQKP (254 aa)) enclose the Glutamine amidotransferase type-1 domain. Gly-357 is an L-glutamine binding site. The active-site Nucleophile; for glutamine hydrolysis is the Cys-384. Residues 385–388 (LGMQ), Glu-408, and Arg-474 contribute to the L-glutamine site. Active-site residues include His-521 and Glu-523.

The protein belongs to the CTP synthase family. As to quaternary structure, homotetramer.

The enzyme catalyses UTP + L-glutamine + ATP + H2O = CTP + L-glutamate + ADP + phosphate + 2 H(+). The catalysed reaction is L-glutamine + H2O = L-glutamate + NH4(+). It catalyses the reaction UTP + NH4(+) + ATP = CTP + ADP + phosphate + 2 H(+). The protein operates within pyrimidine metabolism; CTP biosynthesis via de novo pathway; CTP from UDP: step 2/2. With respect to regulation, allosterically activated by GTP, when glutamine is the substrate; GTP has no effect on the reaction when ammonia is the substrate. The allosteric effector GTP functions by stabilizing the protein conformation that binds the tetrahedral intermediate(s) formed during glutamine hydrolysis. Inhibited by the product CTP, via allosteric rather than competitive inhibition. Catalyzes the ATP-dependent amination of UTP to CTP with either L-glutamine or ammonia as the source of nitrogen. Regulates intracellular CTP levels through interactions with the four ribonucleotide triphosphates. The protein is CTP synthase of Acidovorax ebreus (strain TPSY) (Diaphorobacter sp. (strain TPSY)).